The sequence spans 355 residues: Phosphoserine aminotransferase (355 aa).

Arginine 41 provides a ligand contact to L-glutamate. Pyridoxal 5'-phosphate-binding positions include 75–76, tryptophan 99, threonine 147, aspartate 166, and glutamine 189; that span reads AS. Lysine 190 carries the N6-(pyridoxal phosphate)lysine modification. Position 231–232 (231–232) interacts with pyridoxal 5'-phosphate; the sequence is NT.

This sequence belongs to the class-V pyridoxal-phosphate-dependent aminotransferase family. SerC subfamily. As to quaternary structure, homodimer. Requires pyridoxal 5'-phosphate as cofactor.

Its subcellular location is the cytoplasm. The catalysed reaction is O-phospho-L-serine + 2-oxoglutarate = 3-phosphooxypyruvate + L-glutamate. It catalyses the reaction 4-(phosphooxy)-L-threonine + 2-oxoglutarate = (R)-3-hydroxy-2-oxo-4-phosphooxybutanoate + L-glutamate. It participates in amino-acid biosynthesis; L-serine biosynthesis; L-serine from 3-phospho-D-glycerate: step 2/3. The protein operates within cofactor biosynthesis; pyridoxine 5'-phosphate biosynthesis; pyridoxine 5'-phosphate from D-erythrose 4-phosphate: step 3/5. Its function is as follows. Catalyzes the reversible conversion of 3-phosphohydroxypyruvate to phosphoserine and of 3-hydroxy-2-oxo-4-phosphonooxybutanoate to phosphohydroxythreonine. The protein is Phosphoserine aminotransferase of Bacteroides fragilis (strain ATCC 25285 / DSM 2151 / CCUG 4856 / JCM 11019 / LMG 10263 / NCTC 9343 / Onslow / VPI 2553 / EN-2).